Here is a 502-residue protein sequence, read N- to C-terminus: Bifunctional purine biosynthesis protein PurH (502 aa).

The 144-residue stretch at 1–144 (MKKRALISVF…KNFQDVVVIS (144 aa)) folds into the MGS-like domain.

The protein belongs to the PurH family.

The catalysed reaction is (6R)-10-formyltetrahydrofolate + 5-amino-1-(5-phospho-beta-D-ribosyl)imidazole-4-carboxamide = 5-formamido-1-(5-phospho-D-ribosyl)imidazole-4-carboxamide + (6S)-5,6,7,8-tetrahydrofolate. It catalyses the reaction IMP + H2O = 5-formamido-1-(5-phospho-D-ribosyl)imidazole-4-carboxamide. It participates in purine metabolism; IMP biosynthesis via de novo pathway; 5-formamido-1-(5-phospho-D-ribosyl)imidazole-4-carboxamide from 5-amino-1-(5-phospho-D-ribosyl)imidazole-4-carboxamide (10-formyl THF route): step 1/1. Its pathway is purine metabolism; IMP biosynthesis via de novo pathway; IMP from 5-formamido-1-(5-phospho-D-ribosyl)imidazole-4-carboxamide: step 1/1. In Clostridium beijerinckii (strain ATCC 51743 / NCIMB 8052) (Clostridium acetobutylicum), this protein is Bifunctional purine biosynthesis protein PurH.